Consider the following 449-residue polypeptide: Bifunctional protein GlmU (449 aa).

The pyrophosphorylase stretch occupies residues 1 to 229 (MKLSAVILAA…EEDIYGINDR (229 aa)). Residues 8–11 (LAAG), Lys-22, Gln-73, and 78–79 (GT) contribute to the UDP-N-acetyl-alpha-D-glucosamine site. Position 102 (Asp-102) interacts with Mg(2+). UDP-N-acetyl-alpha-D-glucosamine contacts are provided by Gly-139, Glu-154, Asn-169, and Asn-227. Asn-227 lines the Mg(2+) pocket. The interval 230-250 (VQLAQAENILRQRKNRELMLS) is linker. The interval 251–449 (GVSLMDPAST…AGQKHLPRKG (199 aa)) is N-acetyltransferase. Arg-332 and Lys-350 together coordinate UDP-N-acetyl-alpha-D-glucosamine. Catalysis depends on His-362, which acts as the Proton acceptor. Residues Tyr-365 and Asn-376 each contribute to the UDP-N-acetyl-alpha-D-glucosamine site. Acetyl-CoA-binding positions include Ala-379, 385-386 (NY), Ser-404, Ala-422, and Arg-439.

This sequence in the N-terminal section; belongs to the N-acetylglucosamine-1-phosphate uridyltransferase family. In the C-terminal section; belongs to the transferase hexapeptide repeat family. Homotrimer. The cofactor is Mg(2+).

The protein localises to the cytoplasm. It catalyses the reaction alpha-D-glucosamine 1-phosphate + acetyl-CoA = N-acetyl-alpha-D-glucosamine 1-phosphate + CoA + H(+). It carries out the reaction N-acetyl-alpha-D-glucosamine 1-phosphate + UTP + H(+) = UDP-N-acetyl-alpha-D-glucosamine + diphosphate. It participates in nucleotide-sugar biosynthesis; UDP-N-acetyl-alpha-D-glucosamine biosynthesis; N-acetyl-alpha-D-glucosamine 1-phosphate from alpha-D-glucosamine 6-phosphate (route II): step 2/2. Its pathway is nucleotide-sugar biosynthesis; UDP-N-acetyl-alpha-D-glucosamine biosynthesis; UDP-N-acetyl-alpha-D-glucosamine from N-acetyl-alpha-D-glucosamine 1-phosphate: step 1/1. It functions in the pathway bacterial outer membrane biogenesis; LPS lipid A biosynthesis. Its function is as follows. Catalyzes the last two sequential reactions in the de novo biosynthetic pathway for UDP-N-acetylglucosamine (UDP-GlcNAc). The C-terminal domain catalyzes the transfer of acetyl group from acetyl coenzyme A to glucosamine-1-phosphate (GlcN-1-P) to produce N-acetylglucosamine-1-phosphate (GlcNAc-1-P), which is converted into UDP-GlcNAc by the transfer of uridine 5-monophosphate (from uridine 5-triphosphate), a reaction catalyzed by the N-terminal domain. This is Bifunctional protein GlmU from Syntrophomonas wolfei subsp. wolfei (strain DSM 2245B / Goettingen).